We begin with the raw amino-acid sequence, 304 residues long: Killer cell immunoglobulin-like receptor 2DS4 (304 aa).

Residues M1–P21 form the signal peptide. Residues Q22–H245 lie on the Extracellular side of the membrane. 2 Ig-like C2-type domains span residues E42–S107 and G142–A205. An intrachain disulfide couples C49 to C100. N67, N84, N144, N178, and N211 each carry an N-linked (GlcNAc...) asparagine glycan. C149 and C198 are oxidised to a cystine. Residues V220–G239 form a disordered region. A helical transmembrane segment spans residues V246–L265. Over H266–A304 the chain is Cytoplasmic. The disordered stretch occupies residues Q280 to A304.

It belongs to the immunoglobulin superfamily. As to quaternary structure, interacts with HLA-F; this interaction is direct.

It localises to the cell membrane. In terms of biological role, receptor on natural killer (NK) cells for HLA-C alleles. Does not inhibit the activity of NK cells. The protein is Killer cell immunoglobulin-like receptor 2DS4 of Homo sapiens (Human).